Here is a 390-residue protein sequence, read N- to C-terminus: Dual-specificity RNA methyltransferase RlmN (390 aa).

Glu111 serves as the catalytic Proton acceptor. The region spanning 117–356 (EDDRATLCVS…VIVRKTRGDD (240 aa)) is the Radical SAM core domain. Cysteines 124 and 361 form a disulfide. Cys131, Cys135, and Cys138 together coordinate [4Fe-4S] cluster. Residues 185–186 (GE), Ser217, 239–241 (SLH), and Asn318 contribute to the S-adenosyl-L-methionine site. Catalysis depends on Cys361, which acts as the S-methylcysteine intermediate.

The protein belongs to the radical SAM superfamily. RlmN family. Requires [4Fe-4S] cluster as cofactor.

The protein localises to the cytoplasm. It carries out the reaction adenosine(2503) in 23S rRNA + 2 reduced [2Fe-2S]-[ferredoxin] + 2 S-adenosyl-L-methionine = 2-methyladenosine(2503) in 23S rRNA + 5'-deoxyadenosine + L-methionine + 2 oxidized [2Fe-2S]-[ferredoxin] + S-adenosyl-L-homocysteine. The enzyme catalyses adenosine(37) in tRNA + 2 reduced [2Fe-2S]-[ferredoxin] + 2 S-adenosyl-L-methionine = 2-methyladenosine(37) in tRNA + 5'-deoxyadenosine + L-methionine + 2 oxidized [2Fe-2S]-[ferredoxin] + S-adenosyl-L-homocysteine. Functionally, specifically methylates position 2 of adenine 2503 in 23S rRNA and position 2 of adenine 37 in tRNAs. m2A2503 modification seems to play a crucial role in the proofreading step occurring at the peptidyl transferase center and thus would serve to optimize ribosomal fidelity. The polypeptide is Dual-specificity RNA methyltransferase RlmN (Edwardsiella ictaluri (strain 93-146)).